The primary structure comprises 356 residues: Butyrate kinase (356 aa).

This sequence belongs to the acetokinase family.

It is found in the cytoplasm. The catalysed reaction is butanoate + ATP = butanoyl phosphate + ADP. Its pathway is lipid metabolism; butanoate metabolism. Catalyzes the conversion of butyryl-CoA through butyryl phosphate to butyrate. This is Butyrate kinase (buk) from Clostridium perfringens (strain ATCC 13124 / DSM 756 / JCM 1290 / NCIMB 6125 / NCTC 8237 / Type A).